Here is a 331-residue protein sequence, read N- to C-terminus: MKQILYKLFEHQYLGRDEARTILQNIAQGKYNDAQVASLITVFLMRNISVEELCGFRDALLEMRVPVDLSEFAPIDIVGTGGDGKNTFNISTAACFTVAGAGFPVVKHGNYGATSVSGASNVMEQHGVKFTDHTDRLRRSMEKCNIAYLHAPLFNPALKAVAPIRKALAVRTFFNMLGPLVNPVIPTYQLLGVYNLPLLRLYTYTYQESATRFAVVHSLDGYDEISLTDEFKVATCGNEKIYTPESLGFNRCRESELDGGNTPEDATRIFDAVMEGTATEAQKNVVIVNAAFAIRVICPEKPIEECIALARESLESGKARETLKKFVELNG.

Residues G79, 82-83 (GD), T87, 89-92 (NIST), 107-115 (KHGNYGATS), and A119 contribute to the 5-phospho-alpha-D-ribose 1-diphosphate site. G79 lines the anthranilate pocket. S91 lines the Mg(2+) pocket. N110 serves as a coordination point for anthranilate. An anthranilate-binding site is contributed by R165. D223 and E224 together coordinate Mg(2+).

The protein belongs to the anthranilate phosphoribosyltransferase family. In terms of assembly, homodimer. It depends on Mg(2+) as a cofactor.

It catalyses the reaction N-(5-phospho-beta-D-ribosyl)anthranilate + diphosphate = 5-phospho-alpha-D-ribose 1-diphosphate + anthranilate. It functions in the pathway amino-acid biosynthesis; L-tryptophan biosynthesis; L-tryptophan from chorismate: step 2/5. Catalyzes the transfer of the phosphoribosyl group of 5-phosphorylribose-1-pyrophosphate (PRPP) to anthranilate to yield N-(5'-phosphoribosyl)-anthranilate (PRA). This is Anthranilate phosphoribosyltransferase from Bacteroides fragilis (strain ATCC 25285 / DSM 2151 / CCUG 4856 / JCM 11019 / LMG 10263 / NCTC 9343 / Onslow / VPI 2553 / EN-2).